Consider the following 237-residue polypeptide: 2-C-methyl-D-erythritol 4-phosphate cytidylyltransferase (237 aa).

It belongs to the IspD/TarI cytidylyltransferase family. IspD subfamily.

It catalyses the reaction 2-C-methyl-D-erythritol 4-phosphate + CTP + H(+) = 4-CDP-2-C-methyl-D-erythritol + diphosphate. The protein operates within isoprenoid biosynthesis; isopentenyl diphosphate biosynthesis via DXP pathway; isopentenyl diphosphate from 1-deoxy-D-xylulose 5-phosphate: step 2/6. In terms of biological role, catalyzes the formation of 4-diphosphocytidyl-2-C-methyl-D-erythritol from CTP and 2-C-methyl-D-erythritol 4-phosphate (MEP). This is 2-C-methyl-D-erythritol 4-phosphate cytidylyltransferase from Vibrio vulnificus (strain YJ016).